The sequence spans 581 residues: Arginine--tRNA ligase (581 aa).

A 'HIGH' region motif is present at residues 123-133 (PNVAKEMHVGH).

It belongs to the class-I aminoacyl-tRNA synthetase family. As to quaternary structure, monomer.

It is found in the cytoplasm. The catalysed reaction is tRNA(Arg) + L-arginine + ATP = L-arginyl-tRNA(Arg) + AMP + diphosphate. The protein is Arginine--tRNA ligase of Blochmanniella pennsylvanica (strain BPEN).